Here is an 832-residue protein sequence, read N- to C-terminus: Subtilisin-like protease SBT2.4 (832 aa).

The signal sequence occupies residues 1-27; that stretch reads METNPRKLRSYSYICLIVCIFVLVVCA. Positions 74-138 constitute an Inhibitor I9 domain; it reads EAKKIEEIHD…VEEDKGVKLM (65 aa). A Peptidase S8 domain is found at 150–690; sequence QQVWQKISNE…AGHVNPARAL (541 aa). Residue D174 is the Charge relay system of the active site. Residues N196 and N238 are each glycosylated (N-linked (GlcNAc...) asparagine). The Charge relay system role is filled by H252. Residues 425–524 enclose the PA domain; that stretch reads TNGSVLQPLT…SAAQIILRYY (100 aa). A glycan (N-linked (GlcNAc...) asparagine) is linked at N426. The Charge relay system role is filled by S618. 3 N-linked (GlcNAc...) asparagine glycosylation sites follow: N761, N774, and N800.

Belongs to the peptidase S8 family.

The protein localises to the secreted. Functionally, serine protease required for epidermal surface formation in embryos and juvenile plants. Involved in embryonic cuticle formation downstream of BHLH95/ZOU. The chain is Subtilisin-like protease SBT2.4 from Arabidopsis thaliana (Mouse-ear cress).